The chain runs to 49 residues: Large ribosomal subunit protein bL33 (49 aa).

The protein belongs to the bacterial ribosomal protein bL33 family.

This Finegoldia magna (strain ATCC 29328 / DSM 20472 / WAL 2508) (Peptostreptococcus magnus) protein is Large ribosomal subunit protein bL33.